Here is a 641-residue protein sequence, read N- to C-terminus: Pre-mRNA-processing factor 39 (641 aa).

The segment at 1-50 (MEKSPEHCAEGSPSPATESAPSATEPPLPSTEPPLPSTEPPLPSTEPPLP) is disordered. Over residues 10-23 (EGSPSPATESAPSA) the composition is skewed to low complexity. Positions 24-50 (TEPPLPSTEPPLPSTEPPLPSTEPPLP) are enriched in pro residues. 7 HAT repeats span residues 50–82 (PPLP…YVEQ), 84–116 (NHLF…LEKK), 118–150 (NNIL…FLKE), 158–193 (ETSL…WETE), 304–336 (NFEE…FELE), 338–370 (GSNE…YMEN), and 372–407 (SVEG…QQGN).

It belongs to the PRP39 family.

Its subcellular location is the nucleus. Involved in pre-mRNA splicing. The polypeptide is Pre-mRNA-processing factor 39 (prpf39) (Xenopus laevis (African clawed frog)).